Reading from the N-terminus, the 214-residue chain is Outer-membrane lipoprotein LolB (214 aa).

An N-terminal signal peptide occupies residues 1–25 (MNNLKRFTKSIFSCIALSGLLFLGG). Cys-26 is lipidated: N-palmitoyl cysteine. Cys-26 carries S-diacylglycerol cysteine lipidation.

The protein belongs to the LolB family. As to quaternary structure, monomer.

The protein resides in the cell outer membrane. In terms of biological role, plays a critical role in the incorporation of lipoproteins in the outer membrane after they are released by the LolA protein. This chain is Outer-membrane lipoprotein LolB, found in Shewanella sp. (strain MR-4).